Reading from the N-terminus, the 483-residue chain is Altronate oxidoreductase (483 aa).

18-29 (IIQFGEGNFLRA) serves as a coordination point for NAD(+).

Belongs to the mannitol dehydrogenase family. UxaB subfamily.

The enzyme catalyses D-altronate + NAD(+) = keto-D-tagaturonate + NADH + H(+). It functions in the pathway carbohydrate metabolism; pentose and glucuronate interconversion. This chain is Altronate oxidoreductase, found in Yersinia enterocolitica serotype O:8 / biotype 1B (strain NCTC 13174 / 8081).